We begin with the raw amino-acid sequence, 336 residues long: Holliday junction branch migration complex subunit RuvB (336 aa).

The segment at A4–Y184 is large ATPase domain (RuvB-L). ATP-binding positions include R24, G65, K68, T69, T70, E131 to Y133, R174, Y184, and R221. T69 contacts Mg(2+). A small ATPAse domain (RuvB-S) region spans residues N185 to D255. The interval D258 to A336 is head domain (RuvB-H). DNA-binding residues include R294, R313, and R318.

This sequence belongs to the RuvB family. As to quaternary structure, homohexamer. Forms an RuvA(8)-RuvB(12)-Holliday junction (HJ) complex. HJ DNA is sandwiched between 2 RuvA tetramers; dsDNA enters through RuvA and exits via RuvB. An RuvB hexamer assembles on each DNA strand where it exits the tetramer. Each RuvB hexamer is contacted by two RuvA subunits (via domain III) on 2 adjacent RuvB subunits; this complex drives branch migration. In the full resolvosome a probable DNA-RuvA(4)-RuvB(12)-RuvC(2) complex forms which resolves the HJ.

Its subcellular location is the cytoplasm. It carries out the reaction ATP + H2O = ADP + phosphate + H(+). The RuvA-RuvB-RuvC complex processes Holliday junction (HJ) DNA during genetic recombination and DNA repair, while the RuvA-RuvB complex plays an important role in the rescue of blocked DNA replication forks via replication fork reversal (RFR). RuvA specifically binds to HJ cruciform DNA, conferring on it an open structure. The RuvB hexamer acts as an ATP-dependent pump, pulling dsDNA into and through the RuvAB complex. RuvB forms 2 homohexamers on either side of HJ DNA bound by 1 or 2 RuvA tetramers; 4 subunits per hexamer contact DNA at a time. Coordinated motions by a converter formed by DNA-disengaged RuvB subunits stimulates ATP hydrolysis and nucleotide exchange. Immobilization of the converter enables RuvB to convert the ATP-contained energy into a lever motion, pulling 2 nucleotides of DNA out of the RuvA tetramer per ATP hydrolyzed, thus driving DNA branch migration. The RuvB motors rotate together with the DNA substrate, which together with the progressing nucleotide cycle form the mechanistic basis for DNA recombination by continuous HJ branch migration. Branch migration allows RuvC to scan DNA until it finds its consensus sequence, where it cleaves and resolves cruciform DNA. This chain is Holliday junction branch migration complex subunit RuvB, found in Shewanella frigidimarina (strain NCIMB 400).